We begin with the raw amino-acid sequence, 407 residues long: Imidazolonepropionase (407 aa).

Fe(3+) contacts are provided by His68 and His70. His68 and His70 together coordinate Zn(2+). Residues Arg77, Tyr140, and His173 each coordinate 4-imidazolone-5-propanoate. N-formimidoyl-L-glutamate is bound at residue Tyr140. His238 provides a ligand contact to Fe(3+). His238 serves as a coordination point for Zn(2+). A 4-imidazolone-5-propanoate-binding site is contributed by Gln241. Asp313 serves as a coordination point for Fe(3+). Residue Asp313 coordinates Zn(2+). Residues Asn315 and Gly317 each coordinate N-formimidoyl-L-glutamate. Residue Thr318 participates in 4-imidazolone-5-propanoate binding.

It belongs to the metallo-dependent hydrolases superfamily. HutI family. Zn(2+) is required as a cofactor. Requires Fe(3+) as cofactor.

It is found in the cytoplasm. The enzyme catalyses 4-imidazolone-5-propanoate + H2O = N-formimidoyl-L-glutamate. It participates in amino-acid degradation; L-histidine degradation into L-glutamate; N-formimidoyl-L-glutamate from L-histidine: step 3/3. In terms of biological role, catalyzes the hydrolytic cleavage of the carbon-nitrogen bond in imidazolone-5-propanoate to yield N-formimidoyl-L-glutamate. It is the third step in the universal histidine degradation pathway. This is Imidazolonepropionase from Burkholderia ambifaria (strain MC40-6).